Here is a 238-residue protein sequence, read N- to C-terminus: 3,4-dihydroxy-2-butanone 4-phosphate synthase (238 aa).

Residues 26–27 (RE), Asp31, 166–170 (RVGQT), and Glu190 each bind D-ribulose 5-phosphate. Glu27 is a Mg(2+) binding site.

Belongs to the DHBP synthase family. In terms of assembly, homodimer. Requires Mg(2+) as cofactor. Mn(2+) is required as a cofactor.

It carries out the reaction D-ribulose 5-phosphate = (2S)-2-hydroxy-3-oxobutyl phosphate + formate + H(+). Its pathway is cofactor biosynthesis; riboflavin biosynthesis; 2-hydroxy-3-oxobutyl phosphate from D-ribulose 5-phosphate: step 1/1. Its function is as follows. Catalyzes the conversion of D-ribulose 5-phosphate to formate and 3,4-dihydroxy-2-butanone 4-phosphate. This chain is 3,4-dihydroxy-2-butanone 4-phosphate synthase, found in Archaeoglobus fulgidus (strain ATCC 49558 / DSM 4304 / JCM 9628 / NBRC 100126 / VC-16).